We begin with the raw amino-acid sequence, 341 residues long: MILLENVKKIYKAKSGDVTAVDNANLKIDKGEIFGVIGYSGAGKSSLIRLFNQLEKPTSGQITIANRVISAITGSELRKARQEIGMIFQHFNLLWSRTVRENIEFPLEIAGVDKAARRKRVDELIHLVGLEGRGDAYPSQLSGGQKQRVGIARALANNPQVLLCDEATSALDPETTDQILDLLLDINKRLGLTIVLITHEMHVIRKICNRVAVMEKGKIVETGPVLDVFRNPQQDITKRFVQQLTDSEDTNETIESLIEKYPDGKVVRLQFIGEAVERPVLQRLMQRSDIEVSILQGNIAQTNNGSYGSLVVHLNGEETAIQQAIEGIHQDQVELEVIAHG.

The ABC transporter domain occupies 2–241 (ILLENVKKIY…PQQDITKRFV (240 aa)). 38 to 45 (GYSGAGKS) lines the ATP pocket.

It belongs to the ABC transporter superfamily. Methionine importer (TC 3.A.1.24) family. As to quaternary structure, the complex is composed of two ATP-binding proteins (MetN), two transmembrane proteins (MetI) and a solute-binding protein (MetQ).

Its subcellular location is the cell membrane. The enzyme catalyses L-methionine(out) + ATP + H2O = L-methionine(in) + ADP + phosphate + H(+). It carries out the reaction D-methionine(out) + ATP + H2O = D-methionine(in) + ADP + phosphate + H(+). Part of the ABC transporter complex MetNIQ involved in methionine import. Responsible for energy coupling to the transport system. The protein is Methionine import ATP-binding protein MetN 2 of Bacillus thuringiensis subsp. konkukian (strain 97-27).